We begin with the raw amino-acid sequence, 785 residues long: Endonuclease MutS2 (785 aa).

335–342 (GPNTGGKT) serves as a coordination point for ATP. Residues 710 to 785 (LDLRGERYED…GNGVTIVEFK (76 aa)) enclose the Smr domain.

It belongs to the DNA mismatch repair MutS family. MutS2 subfamily. Homodimer. Binds to stalled ribosomes, contacting rRNA.

Endonuclease that is involved in the suppression of homologous recombination and thus may have a key role in the control of bacterial genetic diversity. In terms of biological role, acts as a ribosome collision sensor, splitting the ribosome into its 2 subunits. Detects stalled/collided 70S ribosomes which it binds and splits by an ATP-hydrolysis driven conformational change. Acts upstream of the ribosome quality control system (RQC), a ribosome-associated complex that mediates the extraction of incompletely synthesized nascent chains from stalled ribosomes and their subsequent degradation. Probably generates substrates for RQC. The sequence is that of Endonuclease MutS2 from Listeria monocytogenes serotype 4b (strain F2365).